The chain runs to 220 residues: MLHLIIAEAELELVPESIRDHPAVVNYARRRKKRPEEAILDSTYHHAALKKLPDGDRRGRPDIVHICLLNALESIANKEGFLRVYVHTRNDEVIHIKPETRLPRNYNRFLGLMESLFKKGAVPEGLELLRIEKKPLESLIEDINPDTVFIMHEEGELIRPRSFGEILASHQNPVVVVGGFPHGDFMRPIEGTKVSLYREPLMAWTVVSEVIVNFEAALGL.

Residues G178, G183, and 196–201 contribute to the S-adenosyl-L-methionine site; that span reads LYREPL.

Belongs to the class IV-like SAM-binding methyltransferase superfamily. RNA methyltransferase NEP1 family. Homodimer.

The enzyme catalyses a pseudouridine in rRNA + S-adenosyl-L-methionine = an N(1)-methylpseudouridine in rRNA + S-adenosyl-L-homocysteine + H(+). Functionally, methyltransferase involved in ribosomal biogenesis. Specifically catalyzes the N1-methylation of the pseudouridine corresponding to position 914 in M.jannaschii 16S rRNA. This Thermococcus kodakarensis (strain ATCC BAA-918 / JCM 12380 / KOD1) (Pyrococcus kodakaraensis (strain KOD1)) protein is Ribosomal RNA small subunit methyltransferase Nep1.